Consider the following 177-residue polypeptide: Peptidyl-tRNA hydrolase 1 (177 aa).

Tyr18 is a binding site for tRNA. His23 functions as the Proton acceptor in the catalytic mechanism. TRNA-binding residues include Phe65, Asn67, and Asn113.

It belongs to the PTH family. In terms of assembly, monomer.

The protein localises to the cytoplasm. The enzyme catalyses an N-acyl-L-alpha-aminoacyl-tRNA + H2O = an N-acyl-L-amino acid + a tRNA + H(+). Its function is as follows. Hydrolyzes ribosome-free peptidyl-tRNAs (with 1 or more amino acids incorporated), which drop off the ribosome during protein synthesis, or as a result of ribosome stalling. Catalyzes the release of premature peptidyl moieties from peptidyl-tRNA molecules trapped in stalled 50S ribosomal subunits, and thus maintains levels of free tRNAs and 50S ribosomes. The sequence is that of Peptidyl-tRNA hydrolase 1 from Corynebacterium glutamicum (strain ATCC 13032 / DSM 20300 / JCM 1318 / BCRC 11384 / CCUG 27702 / LMG 3730 / NBRC 12168 / NCIMB 10025 / NRRL B-2784 / 534).